We begin with the raw amino-acid sequence, 410 residues long: Arginine deiminase (410 aa).

C400 serves as the catalytic Amidino-cysteine intermediate.

It belongs to the arginine deiminase family.

Its subcellular location is the cytoplasm. It carries out the reaction L-arginine + H2O = L-citrulline + NH4(+). It functions in the pathway amino-acid degradation; L-arginine degradation via ADI pathway; carbamoyl phosphate from L-arginine: step 1/2. This is Arginine deiminase from Bacillus cytotoxicus (strain DSM 22905 / CIP 110041 / 391-98 / NVH 391-98).